The chain runs to 411 residues: S-adenosylmethionine synthase (411 aa).

An ATP-binding site is contributed by histidine 15. Mg(2+) is bound at residue aspartate 17. Glutamate 43 contributes to the K(+) binding site. L-methionine contacts are provided by glutamate 56 and glutamine 99. The interval glutamine 99–threonine 109 is flexible loop. ATP is bound by residues aspartate 179–lysine 181, aspartate 260, arginine 266–lysine 267, alanine 283, and lysine 287. Aspartate 260 is a binding site for L-methionine. Position 291 (lysine 291) interacts with L-methionine.

Belongs to the AdoMet synthase family. Homotetramer; dimer of dimers. The cofactor is Mg(2+). It depends on K(+) as a cofactor.

The protein resides in the cytoplasm. The enzyme catalyses L-methionine + ATP + H2O = S-adenosyl-L-methionine + phosphate + diphosphate. The protein operates within amino-acid biosynthesis; S-adenosyl-L-methionine biosynthesis; S-adenosyl-L-methionine from L-methionine: step 1/1. Its function is as follows. Catalyzes the formation of S-adenosylmethionine (AdoMet) from methionine and ATP. The overall synthetic reaction is composed of two sequential steps, AdoMet formation and the subsequent tripolyphosphate hydrolysis which occurs prior to release of AdoMet from the enzyme. The chain is S-adenosylmethionine synthase from Corynebacterium jeikeium (strain K411).